The chain runs to 209 residues: Orotate phosphoribosyltransferase (209 aa).

Residues arginine 96, lysine 100, histidine 102, and 122-130 (EDLISTGGS) each bind 5-phospho-alpha-D-ribose 1-diphosphate. Serine 126 is an orotate binding site.

Belongs to the purine/pyrimidine phosphoribosyltransferase family. PyrE subfamily. As to quaternary structure, homodimer. Mg(2+) is required as a cofactor.

The catalysed reaction is orotidine 5'-phosphate + diphosphate = orotate + 5-phospho-alpha-D-ribose 1-diphosphate. It participates in pyrimidine metabolism; UMP biosynthesis via de novo pathway; UMP from orotate: step 1/2. Functionally, catalyzes the transfer of a ribosyl phosphate group from 5-phosphoribose 1-diphosphate to orotate, leading to the formation of orotidine monophosphate (OMP). This is Orotate phosphoribosyltransferase from Lactococcus lactis subsp. cremoris (strain SK11).